The primary structure comprises 376 residues: Hydroxylysine kinase (376 aa).

The Proton acceptor role is filled by Asp229.

The protein belongs to the aminoglycoside phosphotransferase family.

The protein resides in the cytoplasm. The enzyme catalyses (5R)-5-hydroxy-L-lysine + GTP = (5R)-5-phosphooxy-L-lysine + GDP + H(+). Functionally, catalyzes the GTP-dependent phosphorylation of 5-hydroxy-L-lysine. The chain is Hydroxylysine kinase (Hykk) from Mus musculus (Mouse).